The sequence spans 442 residues: Probable carboxypeptidase PAAG_00768 (442 aa).

Positions 1-20 (MKLQYLVALLFVQAVPPVTA) are cleaved as a signal peptide. An N-linked (GlcNAc...) asparagine glycan is attached at asparagine 102. Aspartate 160 contacts Zn(2+). Residue glutamate 192 is the Proton acceptor of the active site. Glutamate 193 lines the Zn(2+) pocket. Asparagine 343 carries N-linked (GlcNAc...) asparagine glycosylation.

The protein belongs to the peptidase M20A family. It depends on Zn(2+) as a cofactor.

It is found in the secreted. This is Probable carboxypeptidase PAAG_00768 from Paracoccidioides lutzii (strain ATCC MYA-826 / Pb01) (Paracoccidioides brasiliensis).